The following is a 452-amino-acid chain: UDP-N-acetylmuramoylalanine--D-glutamate ligase (452 aa).

119-125 (GSNGKTT) lines the ATP pocket.

It belongs to the MurCDEF family.

The protein localises to the cytoplasm. The catalysed reaction is UDP-N-acetyl-alpha-D-muramoyl-L-alanine + D-glutamate + ATP = UDP-N-acetyl-alpha-D-muramoyl-L-alanyl-D-glutamate + ADP + phosphate + H(+). It functions in the pathway cell wall biogenesis; peptidoglycan biosynthesis. In terms of biological role, cell wall formation. Catalyzes the addition of glutamate to the nucleotide precursor UDP-N-acetylmuramoyl-L-alanine (UMA). This chain is UDP-N-acetylmuramoylalanine--D-glutamate ligase, found in Streptococcus pyogenes serotype M12 (strain MGAS9429).